Consider the following 249-residue polypeptide: MKTGILLTLCYDGSNYHGWINQTNSISTQTVLNKAIKKVIKTSEFKTIGASKTDANVHALDQKVLLIIYFTPILEKFINAINKALPEDIRILNAKFVDPNFNIREVDYKIYNYYINDHKFDIFTNRYEYFWKHSKIDILKLQEIFNLFIGEHEFKLFSGLKENEWDNYQTKRIIDDIKVLRINNKVVIQFKATGFIRYQIRIIIANCLNAYLNYKVNINTLTEMLQGIGKKTPFIIKAKGLVLQEIKFK.

The Nucleophile role is filled by Asp-54. Tyr-111 lines the substrate pocket.

The protein belongs to the tRNA pseudouridine synthase TruA family. As to quaternary structure, homodimer.

It carries out the reaction uridine(38/39/40) in tRNA = pseudouridine(38/39/40) in tRNA. Its function is as follows. Formation of pseudouridine at positions 38, 39 and 40 in the anticodon stem and loop of transfer RNAs. In Mycoplasma capricolum subsp. capricolum (strain California kid / ATCC 27343 / NCTC 10154), this protein is tRNA pseudouridine synthase A.